The following is a 213-amino-acid chain: Thiamine-phosphate synthase (213 aa).

4-amino-2-methyl-5-(diphosphooxymethyl)pyrimidine contacts are provided by residues 39 to 43 and Asn-71; that span reads QLREK. Residues Asp-72 and Asp-91 each coordinate Mg(2+). A 4-amino-2-methyl-5-(diphosphooxymethyl)pyrimidine-binding site is contributed by Ser-110. 136–138 contacts 2-[(2R,5Z)-2-carboxy-4-methylthiazol-5(2H)-ylidene]ethyl phosphate; it reads TGT. A 4-amino-2-methyl-5-(diphosphooxymethyl)pyrimidine-binding site is contributed by Lys-139. 2-[(2R,5Z)-2-carboxy-4-methylthiazol-5(2H)-ylidene]ethyl phosphate contacts are provided by residues Gly-166 and 186 to 187; that span reads VS.

Belongs to the thiamine-phosphate synthase family. Mg(2+) serves as cofactor.

The enzyme catalyses 2-[(2R,5Z)-2-carboxy-4-methylthiazol-5(2H)-ylidene]ethyl phosphate + 4-amino-2-methyl-5-(diphosphooxymethyl)pyrimidine + 2 H(+) = thiamine phosphate + CO2 + diphosphate. It catalyses the reaction 2-(2-carboxy-4-methylthiazol-5-yl)ethyl phosphate + 4-amino-2-methyl-5-(diphosphooxymethyl)pyrimidine + 2 H(+) = thiamine phosphate + CO2 + diphosphate. The catalysed reaction is 4-methyl-5-(2-phosphooxyethyl)-thiazole + 4-amino-2-methyl-5-(diphosphooxymethyl)pyrimidine + H(+) = thiamine phosphate + diphosphate. It participates in cofactor biosynthesis; thiamine diphosphate biosynthesis; thiamine phosphate from 4-amino-2-methyl-5-diphosphomethylpyrimidine and 4-methyl-5-(2-phosphoethyl)-thiazole: step 1/1. Functionally, condenses 4-methyl-5-(beta-hydroxyethyl)thiazole monophosphate (THZ-P) and 2-methyl-4-amino-5-hydroxymethyl pyrimidine pyrophosphate (HMP-PP) to form thiamine monophosphate (TMP). The chain is Thiamine-phosphate synthase from Clostridium botulinum (strain Eklund 17B / Type B).